A 392-amino-acid chain; its full sequence is L-serine phosphate decarboxylase (392 aa).

Residues 22 to 29 are required for catalytic activity; that stretch reads NAGSHSPS. N180 is a binding site for O-phospho-L-serine. Residue K243 is modified to N6-(pyridoxal phosphate)lysine. Positions 354 and 368 each coordinate O-phospho-L-serine.

The protein belongs to the class-II pyridoxal-phosphate-dependent aminotransferase family. In terms of assembly, homodimer. It depends on pyridoxal 5'-phosphate as a cofactor.

It carries out the reaction O-phospho-L-serine + H(+) = phosphoethanolamine + CO2. The protein operates within cofactor biosynthesis. Its function is as follows. Pyridoxal phosphate (PLP)-dependent decarboxylase involved in the biosynthesis of norcobamides, cofactors in the tetrachloroethene reductive dehalogenase PceA of S.multivorans. Catalyzes the decarboxylation of L-serine O-phosphate to ethanolamine O-phosphate, the precursor for the linkage between the nucleotide loop and the corrin ring in norcobamide. Less active with L-threonine phosphate. No activity with L-serine or L-threonine. Has no aminotransferase activity as no production of L-glutamate with L-histidinol phosphate and 2-oxoglutarate as substrates. Complements growth defects in the S.enterica cobD deletion mutant, but of the cobamides, the norpseudo-vitamin B12 (norpseudo-B12) rather than the pseudo-B12 is produced in the mutant. However, addition of L-threonine phosphate to the culture minimal medium of the mutant results in formation of also the pseudo-B12, indicating the dual substrate specificity of this enzyme. The polypeptide is L-serine phosphate decarboxylase (Sulfurospirillum multivorans (strain DM 12446 / JCM 15788 / NBRC 109480)).